A 55-amino-acid polypeptide reads, in one-letter code: Ferredoxin-1 (55 aa).

4Fe-4S ferredoxin-type domains follow at residues 2-27 (YKIE…EQGD) and 28-55 (TIFV…PVAE). Residues C8, C11, C14, C18, C37, C40, C43, and C47 each coordinate [4Fe-4S] cluster.

[4Fe-4S] cluster is required as a cofactor.

Its function is as follows. Ferredoxins are iron-sulfur proteins that transfer electrons in a wide variety of metabolic reactions. The chain is Ferredoxin-1 from Rhodospirillum rubrum.